Here is a 183-residue protein sequence, read N- to C-terminus: Adenine phosphoribosyltransferase (183 aa).

Belongs to the purine/pyrimidine phosphoribosyltransferase family. Homodimer.

It localises to the cytoplasm. The enzyme catalyses AMP + diphosphate = 5-phospho-alpha-D-ribose 1-diphosphate + adenine. It functions in the pathway purine metabolism; AMP biosynthesis via salvage pathway; AMP from adenine: step 1/1. Its function is as follows. Catalyzes a salvage reaction resulting in the formation of AMP, that is energically less costly than de novo synthesis. The polypeptide is Adenine phosphoribosyltransferase (Salmonella arizonae (strain ATCC BAA-731 / CDC346-86 / RSK2980)).